The sequence spans 85 residues: UPF0291 protein SEQ_0545 (85 aa).

The segment at 62–85 (TPEKLRQVQREKGLHGRSLDDPES) is disordered.

The protein belongs to the UPF0291 family.

Its subcellular location is the cytoplasm. The chain is UPF0291 protein SEQ_0545 from Streptococcus equi subsp. equi (strain 4047).